A 205-amino-acid polypeptide reads, in one-letter code: Probable GTP-binding protein EngB (205 aa).

In terms of domain architecture, EngB-type G spans 21 to 196; sequence QVPEVAFAGR…VHEVSKCVKE (176 aa). GTP-binding positions include 29-36, 56-60, 74-77, 141-144, and 172-177; these read GRSNVGKS, GSTRQ, DLPG, TKID, and IIGTSS. Residues Ser-36 and Thr-58 each contribute to the Mg(2+) site.

Belongs to the TRAFAC class TrmE-Era-EngA-EngB-Septin-like GTPase superfamily. EngB GTPase family. Mg(2+) is required as a cofactor.

Its function is as follows. Necessary for normal cell division and for the maintenance of normal septation. The protein is Probable GTP-binding protein EngB of Anaplasma marginale (strain Florida).